The following is a 279-amino-acid chain: MKAYLDLMQDVVDNGFDKGDRTGVGTRSVFGRQMRFNLQDGFPLVTTKKVHLRSIIYELLWFLKGSTDNTWLAERKVSIWNEWALENGDLGPIYGKQWRSWQCHDGRVIDQISEVIEQIRTKPNSRRLIVSAWNPAELPDESISPQDNVREGRMALAPCHCLFQFYVADGKLSCQLYQRSADLFLGVPFNIASYALLTHMIAQQCDLDVGEFVHTFGDCHLYRNHLTDDIVFEQLRREPRALPKLVIKRKPESIFGYELEDFEFEGYDPSPVIKAPIAI.

Residue R21 participates in dUMP binding. Residue H51 participates in (6R)-5,10-methylene-5,6,7,8-tetrahydrofolate binding. Residue 126–127 (RR) participates in dUMP binding. The Nucleophile role is filled by C159. DUMP contacts are provided by residues 179-182 (RSAD), N190, and 220-222 (HLY). D182 serves as a coordination point for (6R)-5,10-methylene-5,6,7,8-tetrahydrofolate. A278 provides a ligand contact to (6R)-5,10-methylene-5,6,7,8-tetrahydrofolate.

Belongs to the thymidylate synthase family. Bacterial-type ThyA subfamily. As to quaternary structure, homodimer.

Its subcellular location is the cytoplasm. The catalysed reaction is dUMP + (6R)-5,10-methylene-5,6,7,8-tetrahydrofolate = 7,8-dihydrofolate + dTMP. It functions in the pathway pyrimidine metabolism; dTTP biosynthesis. In terms of biological role, catalyzes the reductive methylation of 2'-deoxyuridine-5'-monophosphate (dUMP) to 2'-deoxythymidine-5'-monophosphate (dTMP) while utilizing 5,10-methylenetetrahydrofolate (mTHF) as the methyl donor and reductant in the reaction, yielding dihydrofolate (DHF) as a by-product. This enzymatic reaction provides an intracellular de novo source of dTMP, an essential precursor for DNA biosynthesis. The protein is Thymidylate synthase of Marinobacter nauticus (strain ATCC 700491 / DSM 11845 / VT8) (Marinobacter aquaeolei).